A 346-amino-acid chain; its full sequence is Small ribosomal subunit biogenesis GTPase RsgA (346 aa).

The interval 1–26 (MAKRKLTQNQTRRIQSNNAKTLHRHK) is disordered. The span at 7-20 (TQNQTRRIQSNNAK) shows a compositional bias: polar residues. A CP-type G domain is found at 103–271 (ENEISRPDYY…LIDSPGIREF (169 aa)). Residues 159–162 (NKVD) and 213–221 (GQSGVGKSS) each bind GTP. Residues C295, C300, H302, and C308 each contribute to the Zn(2+) site.

This sequence belongs to the TRAFAC class YlqF/YawG GTPase family. RsgA subfamily. As to quaternary structure, monomer. Associates with 30S ribosomal subunit, binds 16S rRNA. The cofactor is Zn(2+).

It is found in the cytoplasm. Functionally, one of several proteins that assist in the late maturation steps of the functional core of the 30S ribosomal subunit. Helps release RbfA from mature subunits. May play a role in the assembly of ribosomal proteins into the subunit. Circularly permuted GTPase that catalyzes slow GTP hydrolysis, GTPase activity is stimulated by the 30S ribosomal subunit. This chain is Small ribosomal subunit biogenesis GTPase RsgA, found in Haemophilus influenzae (strain 86-028NP).